Reading from the N-terminus, the 542-residue chain is Protein GDAP2 homolog (542 aa).

The Macro domain maps to 58–237; that stretch reads RSPFPLSKDV…TYEVLAPLYF (180 aa). A disordered region spans residues 277 to 304; the sequence is PQHSVHMRHGHTDDDSDVSPHDMEGNSS. Basic and acidic residues predominate over residues 286–300; that stretch reads GHTDDDSDVSPHDME. Residues 373–530 enclose the CRAL-TRIO domain; it reads QVEDLTEVSG…YITEYDMATN (158 aa).

The protein belongs to the GDAP2 family.

The chain is Protein GDAP2 homolog from Drosophila pseudoobscura pseudoobscura (Fruit fly).